A 242-amino-acid polypeptide reads, in one-letter code: uncharacterized protein (242 aa).

It to E.coli MazG and to plasmid pIP1100 erythromycin esterase.

This is an uncharacterized protein from Streptomyces cacaoi.